We begin with the raw amino-acid sequence, 599 residues long: MVTLFCAVVGVAGSTFPVDINENKSVGHLKKAIKEEKMYQFPADELQLFLAKAGGNAWLSSLTEDVKKLKKGEKTALVKSLTQEEKELQGEDPISECLEGMDPPKVKQIHVLVALPPGTSSAPISDGTDLWLSRFQHSEVAKLTLLPTRGDLNEFIGQPLPVKIGLPQSVFQAWSSPLILGQLLRDKLFELNDISPCEFLKDSVFSAAFLYPQVDGDATESAFHYFWDSIIRVVLGFVFRRAYVNRDSSRKSSSGLKRPDFLFALDHICVFRGEEKEPRTSITVPREELSKKLVWSYGGVPYVFGYAASGFELELFAIYQDVTGNVKTHLIGGFNLQHAPERFRLVLALLNLCLLFPAIVQNCPASAGTEFMDIHRANGVKVRLSPIFVDKIFHTQEEYRRVKQIYDSLKAYGVPCADAVVTVDSDQLRLTLKPRGIEMKPCSLSELFVALGNVLEALVVLHRNGWMHRDIRWSNVIKHIDRVEWFLIDFADAAQSPQKYPSGDHLTHDEHASDIFMEGGSHTTAVDLWAVGYLVKTSKIEREWTAEPERALFLDRLMNPDPSARPTADEALQLLSRFEREAAEQESQGKGVRKKHRRA.

An N-terminal signal peptide occupies residues 1–17 (MVTLFCAVVGVAGSTFP). The interval 18 to 52 (VDINENKSVGHLKKAIKEEKMYQFPADELQLFLAK) is LQLFLAK domain. An N-linked (GlcNAc...) asparagine glycan is attached at Asn-23. Residues 53 to 109 (AGGNAWLSSLTEDVKKLKKGEKTALVKSLTQEEKELQGEDPISECLEGMDPPKVKQI) are DWL domain. The HVLVXXP motif motif lies at 110-116 (HVLVALP). Residues 117 to 590 (PGTSSAPISD…EAAEQESQGK (474 aa)) form a C-terminal D2 effector domain region. Residues Ser-249, Ser-281, and Ser-385 each carry the phosphoserine modification. One can recognise a Protein kinase domain in the interval 289-590 (LSKKLVWSYG…EAAEQESQGK (302 aa)). Asp-470 serves as the catalytic Proton acceptor. Residues Ser-474 and Ser-587 each carry the phosphoserine modification. The disordered stretch occupies residues 577–599 (RFEREAAEQESQGKGVRKKHRRA). A Host nuclear localization signal motif is present at residues 590–599 (KGVRKKHRRA).

This sequence in the N-terminal section; belongs to the Crinkler effector family. It in the C-terminal section; belongs to the protein kinase superfamily. Dimerizes in host plants. Autophosphorylated at Ser-249, Ser-281, Ser-385, Ser-474 and Ser-587. Additional serines or threonines are also targeted for phosphorylation.

The protein localises to the secreted. Its subcellular location is the host nucleus. It carries out the reaction L-seryl-[protein] + ATP = O-phospho-L-seryl-[protein] + ADP + H(+). The enzyme catalyses L-threonyl-[protein] + ATP = O-phospho-L-threonyl-[protein] + ADP + H(+). Secreted effector that induces cell death when expressed in host plants. Acts as a kinase and is able to autophosphorylate, however its cell death inducing ability is not a direct result of its kinase activity, but rather a consequence of the phosphorylated state of the five identified serine residues in the CRN8 protein. This Phytophthora infestans (Potato late blight agent) protein is Crinkler effector protein 8.